Consider the following 103-residue polypeptide: GP16 protein (103 aa).

The protein is GP16 protein (GP16) of Orgyia pseudotsugata multicapsid polyhedrosis virus (OpMNPV).